A 1260-amino-acid polypeptide reads, in one-letter code: uncharacterized protein (1260 aa).

Belongs to the oxoprolinase family.

This is an uncharacterized protein from Schizosaccharomyces pombe (strain 972 / ATCC 24843) (Fission yeast).